We begin with the raw amino-acid sequence, 658 residues long: Threonine--tRNA ligase (658 aa).

Residues 1–61 (MSDVRVIIQR…KDGEEVEPVQ (61 aa)) form the TGS domain. The interval 259-554 (DHRKLGNELD…LLEHYAGAFP (296 aa)) is catalytic. Positions 353, 404, and 531 each coordinate Zn(2+).

It belongs to the class-II aminoacyl-tRNA synthetase family. In terms of assembly, homodimer. Requires Zn(2+) as cofactor.

It localises to the cytoplasm. It carries out the reaction tRNA(Thr) + L-threonine + ATP = L-threonyl-tRNA(Thr) + AMP + diphosphate + H(+). In terms of biological role, catalyzes the attachment of threonine to tRNA(Thr) in a two-step reaction: L-threonine is first activated by ATP to form Thr-AMP and then transferred to the acceptor end of tRNA(Thr). Also edits incorrectly charged L-seryl-tRNA(Thr). The sequence is that of Threonine--tRNA ligase from Streptomyces avermitilis (strain ATCC 31267 / DSM 46492 / JCM 5070 / NBRC 14893 / NCIMB 12804 / NRRL 8165 / MA-4680).